The sequence spans 458 residues: D-inositol 3-phosphate glycosyltransferase (458 aa).

A disordered region spans residues 1-29 (MRADRPGHRSRGINPGPGMFTLVGPDERD). 1D-myo-inositol 3-phosphate is bound at residue histidine 47. UDP-N-acetyl-alpha-D-glucosamine contacts are provided by residues 53 to 54 (QP) and glycine 61. Residues 58–63 (DAGGMN), lysine 116, tyrosine 149, threonine 173, and arginine 193 each bind 1D-myo-inositol 3-phosphate. Arginine 267, lysine 272, and valine 339 together coordinate UDP-N-acetyl-alpha-D-glucosamine. Residue alanine 351 coordinates Mg(2+). Residues glutamate 361 and glutamate 369 each contribute to the UDP-N-acetyl-alpha-D-glucosamine site. Residue threonine 375 coordinates Mg(2+).

The protein belongs to the glycosyltransferase group 1 family. MshA subfamily. As to quaternary structure, homodimer.

The enzyme catalyses 1D-myo-inositol 3-phosphate + UDP-N-acetyl-alpha-D-glucosamine = 1D-myo-inositol 2-acetamido-2-deoxy-alpha-D-glucopyranoside 3-phosphate + UDP + H(+). Its function is as follows. Catalyzes the transfer of a N-acetyl-glucosamine moiety to 1D-myo-inositol 3-phosphate to produce 1D-myo-inositol 2-acetamido-2-deoxy-glucopyranoside 3-phosphate in the mycothiol biosynthesis pathway. This chain is D-inositol 3-phosphate glycosyltransferase, found in Nocardioides sp. (strain ATCC BAA-499 / JS614).